The following is a 283-amino-acid chain: Elongation factor Ts (283 aa).

Residues 80–83 (TDFV) form an involved in Mg(2+) ion dislocation from EF-Tu region.

This sequence belongs to the EF-Ts family.

It is found in the cytoplasm. Functionally, associates with the EF-Tu.GDP complex and induces the exchange of GDP to GTP. It remains bound to the aminoacyl-tRNA.EF-Tu.GTP complex up to the GTP hydrolysis stage on the ribosome. This chain is Elongation factor Ts, found in Pectobacterium atrosepticum (strain SCRI 1043 / ATCC BAA-672) (Erwinia carotovora subsp. atroseptica).